The following is a 323-amino-acid chain: Homoserine kinase (323 aa).

97–107 (PHGRGMGSSGA) provides a ligand contact to ATP.

The protein belongs to the GHMP kinase family. Homoserine kinase subfamily.

It localises to the cytoplasm. The enzyme catalyses L-homoserine + ATP = O-phospho-L-homoserine + ADP + H(+). Its pathway is amino-acid biosynthesis; L-threonine biosynthesis; L-threonine from L-aspartate: step 4/5. In terms of biological role, catalyzes the ATP-dependent phosphorylation of L-homoserine to L-homoserine phosphate. The protein is Homoserine kinase of Leifsonia xyli subsp. xyli (strain CTCB07).